The chain runs to 118 residues: Large ribosomal subunit protein uL18 (118 aa).

It belongs to the universal ribosomal protein uL18 family. Part of the 50S ribosomal subunit; part of the 5S rRNA/L5/L18/L25 subcomplex. Contacts the 5S and 23S rRNAs.

This is one of the proteins that bind and probably mediate the attachment of the 5S RNA into the large ribosomal subunit, where it forms part of the central protuberance. This Parvibaculum lavamentivorans (strain DS-1 / DSM 13023 / NCIMB 13966) protein is Large ribosomal subunit protein uL18.